Here is a 165-residue protein sequence, read N- to C-terminus: Shikimate kinase (165 aa).

11–16 (GAGKTT) provides a ligand contact to ATP. Position 15 (Thr15) interacts with Mg(2+). Residues Asp33, Arg57, and Gly78 each contribute to the substrate site. An ATP-binding site is contributed by Arg116. Arg134 is a binding site for substrate.

Belongs to the shikimate kinase family. In terms of assembly, monomer. Mg(2+) serves as cofactor.

Its subcellular location is the cytoplasm. It catalyses the reaction shikimate + ATP = 3-phosphoshikimate + ADP + H(+). Its pathway is metabolic intermediate biosynthesis; chorismate biosynthesis; chorismate from D-erythrose 4-phosphate and phosphoenolpyruvate: step 5/7. Functionally, catalyzes the specific phosphorylation of the 3-hydroxyl group of shikimic acid using ATP as a cosubstrate. This chain is Shikimate kinase, found in Bacillus cereus (strain AH187).